A 184-amino-acid chain; its full sequence is Large ribosomal subunit protein uL5c (184 aa).

Belongs to the universal ribosomal protein uL5 family. As to quaternary structure, part of the 50S ribosomal subunit; contacts the 5S rRNA.

It localises to the plastid. It is found in the chloroplast. Binds 5S rRNA, forms part of the central protuberance of the 50S subunit. The polypeptide is Large ribosomal subunit protein uL5c (rpl5) (Zygnema circumcarinatum (Green alga)).